Consider the following 107-residue polypeptide: MTLEKTTRMNYLFDFYQTLLTSKQKSYMSLYYLDDFSLGEIAEEYHVSRQAVYDNIKRTEAMLEQYEEKLLLFKKFQERKKIFEALRKLTDGQPEAESLIDALEKLD.

The protein belongs to the UPF0122 family.

Functionally, might take part in the signal recognition particle (SRP) pathway. This is inferred from the conservation of its genetic proximity to ftsY/ffh. May be a regulatory protein. The chain is UPF0122 protein BLi01817/BL02321 from Bacillus licheniformis (strain ATCC 14580 / DSM 13 / JCM 2505 / CCUG 7422 / NBRC 12200 / NCIMB 9375 / NCTC 10341 / NRRL NRS-1264 / Gibson 46).